We begin with the raw amino-acid sequence, 81 residues long: GAMMA-ctenitoxin-Pn1a (81 aa).

The N-terminal stretch at 1–16 (MKVAIVFLSLLVLAFA) is a signal peptide. Residues 17–34 (SESIEENREEFPVEESAR) constitute a propeptide that is removed on maturation. 5 disulfides stabilise this stretch: cysteine 35–cysteine 49, cysteine 42–cysteine 55, cysteine 46–cysteine 81, cysteine 48–cysteine 65, and cysteine 57–cysteine 63.

The protein belongs to the neurotoxin 03 (Tx2) family. 05 subfamily. As to expression, expressed by the venom gland.

It is found in the secreted. Functionally, this insecticidal neurotoxin targets two types of channels/receptors. It reversibly inhibits the N-methyl-D-aspartate (NMDA)-subtype of ionotropic glutamate receptor (GRIN). It inhibits glutamate uptake from rat brain synaptosomes, and blocks GRIN in hippocampal slices. It also acts on sodium channels of both insects and mammals. On sodium channel insects, it strongly slows down channel inactivation (EC(50)=212.5 nM) and causes an increase (105%) in peak amplitude (at 1 uM) of B.germanica sodium channel (Nav), whereas it inhibits all mammalien sodium channels tested with the following order of potency: Nav1.3/SCN3A (IC(50)=1.5 uM) &gt; Nav1.6/SCN8A &gt; Nav1.5/SCN5A &gt; Nav1.4/SCN4A &gt;= Nav1.2/SCN2A. In vivo, it is highly toxic to house fly (Musca domestica), cockroach (Periplaneta americana), and cricket (Acheta domesticus). In different rat pain models (induced by PGE2, carrageenan or glutamate), it shows antinociceptive effect that may be related to an inhibitory activity on the glutamatergic system. In Phoneutria nigriventer (Brazilian armed spider), this protein is GAMMA-ctenitoxin-Pn1a.